Reading from the N-terminus, the 115-residue chain is Small ribosomal subunit protein bS18c (115 aa).

The interval 91 to 115 (TNALKARTQNKDQKKEKFQINKKKK) is disordered. Basic and acidic residues predominate over residues 99–109 (QNKDQKKEKFQ).

The protein belongs to the bacterial ribosomal protein bS18 family. In terms of assembly, part of the 30S ribosomal subunit.

It is found in the plastid. The protein resides in the chloroplast. The polypeptide is Small ribosomal subunit protein bS18c (Ipomoea purpurea (Common morning glory)).